A 603-amino-acid chain; its full sequence is Adenine deaminase 1 (603 aa).

The protein belongs to the metallo-dependent hydrolases superfamily. Adenine deaminase family. It depends on Mn(2+) as a cofactor.

It carries out the reaction adenine + H2O + H(+) = hypoxanthine + NH4(+). The protein is Adenine deaminase 1 of Carboxydothermus hydrogenoformans (strain ATCC BAA-161 / DSM 6008 / Z-2901).